The following is a 505-amino-acid chain: Kelch-like protein 42 (505 aa).

The 74-residue stretch at 5–78 (EMVQIRLEDR…INAGGAREGW (74 aa)) folds into the BTB domain. Position 43 is a phosphoserine (S43). Kelch repeat units lie at residues 176-234 (PGDV…PLAN), 235-282 (NLPP…NEWL), 284-325 (VASM…DAWN), 327-372 (VAPL…DMWT), 374-429 (FETC…RQWL), and 431-480 (LKEN…DSWE).

In terms of assembly, component of the BCR(KLHL42) E3 ubiquitin ligase complex, at least composed of CUL3 and KLHL42. Interacts (via the BTB domain) with CUL3. Interacts (via the kelch domains) with KATNA1.

The protein resides in the cytoplasm. It localises to the cytoskeleton. Its subcellular location is the spindle. Its pathway is protein modification; protein ubiquitination. Substrate-specific adapter of a BCR (BTB-CUL3-RBX1) E3 ubiquitin-protein ligase complex required for mitotic progression and cytokinesis. The BCR(KLHL42) E3 ubiquitin ligase complex mediates the ubiquitination and subsequent degradation of KATNA1. Involved in microtubule dynamics throughout mitosis. This is Kelch-like protein 42 (KLHL42) from Homo sapiens (Human).